The chain runs to 201 residues: Charged multivesicular body protein 6 (201 aa).

Residue glycine 2 is the site of N-myristoyl glycine attachment. Residues 10-145 are a coiled coil; the sequence is QSRVTEQDKA…YQRQIDELLA (136 aa). The residue at position 119 (serine 119) is a Phosphoserine. Phosphothreonine is present on threonine 130. The Type-2 MIT-interacting motif signature appears at 168-179; it reads IELPEVPSEPLP. Residues 171 to 201 form a disordered region; it reads PEVPSEPLPEKIPEDVPVKARPRQAELVAAS. A compositionally biased stretch (basic and acidic residues) spans 178-188; sequence LPEKIPEDVPV.

Belongs to the SNF7 family. In terms of assembly, probable core component of the endosomal sorting required for transport complex III (ESCRT-III). ESCRT-III components are thought to multimerize to form a flat lattice on the perimeter membrane of the endosome. Several assembly forms of ESCRT-III may exist that interact and act sequentially. Interacts with VPS4A; the interaction is direct. Interacts with VPS4B; the interaction is direct. Interacts with CHMP4A, CHMP4B and CHMP4C. Interacts with SNF8, VPS25 and VPS36. In terms of processing, ISGylated in a CHMP5-dependent manner. Isgylation weakens its interaction with VPS4A.

The protein localises to the endomembrane system. Its subcellular location is the endosome membrane. The protein resides in the late endosome membrane. It localises to the membrane. In terms of biological role, probable core component of the endosomal sorting required for transport complex III (ESCRT-III) which is involved in multivesicular bodies (MVBs) formation and sorting of endosomal cargo proteins into MVBs. MVBs contain intraluminal vesicles (ILVs) that are generated by invagination and scission from the limiting membrane of the endosome and mostly are delivered to lysosomes enabling degradation of membrane proteins, such as stimulated growth factor receptors, lysosomal enzymes and lipids. The MVB pathway appears to require the sequential function of ESCRT-O, -I,-II and -III complexes. ESCRT-III proteins mostly dissociate from the invaginating membrane before the ILV is released. The ESCRT machinery also functions in topologically equivalent membrane fission events, such as the terminal stages of cytokinesis and the budding of enveloped viruses (lentiviruses). ESCRT-III proteins are believed to mediate the necessary vesicle extrusion and/or membrane fission activities, possibly in conjunction with the AAA ATPase VPS4. In the ESCRT-III complex, it probably serves as an acceptor for the ESCRT-II complex on endosomal membrane. The chain is Charged multivesicular body protein 6 (CHMP6) from Pongo abelii (Sumatran orangutan).